A 74-amino-acid polypeptide reads, in one-letter code: Small ribosomal subunit protein bS20c (74 aa).

The protein belongs to the bacterial ribosomal protein bS20 family.

The protein localises to the plastid. The protein resides in the chloroplast. Its function is as follows. Binds directly to 16S ribosomal RNA. The protein is Small ribosomal subunit protein bS20c of Cyanidioschyzon merolae (strain NIES-3377 / 10D) (Unicellular red alga).